We begin with the raw amino-acid sequence, 227 residues long: UPF0441 protein YPO0661/y3517/YP_2976 (227 aa).

The segment at 198-227 (GGFGESVAKQSSMQRSAATSSKTTTRSMGG) is disordered. The segment covering 212–227 (RSAATSSKTTTRSMGG) has biased composition (low complexity).

This sequence belongs to the UPF0441 family.

The polypeptide is UPF0441 protein YPO0661/y3517/YP_2976 (Yersinia pestis).